We begin with the raw amino-acid sequence, 186 residues long: Elongation factor P (186 aa).

This sequence belongs to the elongation factor P family.

The protein resides in the cytoplasm. Its pathway is protein biosynthesis; polypeptide chain elongation. In terms of biological role, involved in peptide bond synthesis. Stimulates efficient translation and peptide-bond synthesis on native or reconstituted 70S ribosomes in vitro. Probably functions indirectly by altering the affinity of the ribosome for aminoacyl-tRNA, thus increasing their reactivity as acceptors for peptidyl transferase. In Streptococcus mutans serotype c (strain ATCC 700610 / UA159), this protein is Elongation factor P.